Reading from the N-terminus, the 654-residue chain is Tetracycline resistance protein TetQ (654 aa).

Positions 1-244 (MNIINLGILA…AISSFILPPE (244 aa)) constitute a tr-type G domain. Residues 10–17 (AHIDAGKT), 74–78 (DTPGH), and 128–131 (NKID) each bind GTP.

It belongs to the TRAFAC class translation factor GTPase superfamily. Classic translation factor GTPase family. TetM/TetO subfamily.

Abolishes the inhibitory effect of tetracyclin on protein synthesis by a non-covalent modification of the ribosomes. The sequence is that of Tetracycline resistance protein TetQ (tetQ) from Prevotella intermedia.